Here is a 188-residue protein sequence, read N- to C-terminus: Protein SYC1 (188 aa).

In terms of assembly, component of the cleavage and polyadenylation factor (CPF) complex, which is composed of at least PTI1, SYC1, SSU72, GLC7, MPE1, REF2, PFS2, PTA1, YSH1/BRR5, SWD2, CFT2/YDH1, YTH1, CFT1/YHH1, FIP1 and PAP1. Component of the APT complex, which is a subcomplex of CPF, and is composed of PTI1, SYC1, SSU72, GLC7, REF2, PTA1 and SWD2.

It is found in the nucleus. Component of the cleavage and polyadenylation factor (CPF) complex, which plays a key role in polyadenylation-dependent pre-mRNA 3'-end formation and cooperates with cleavage factors including the CFIA complex and NAB4/CFIB. Component of the APT complex, which may be involved in polyadenylation-independent transcript 3'-end formation, including snoRNAs and snRNAs. In Saccharomyces cerevisiae (strain ATCC 204508 / S288c) (Baker's yeast), this protein is Protein SYC1 (SYC1).